The primary structure comprises 242 residues: Small ribosomal subunit protein uS2 (242 aa).

Belongs to the universal ribosomal protein uS2 family.

In Neisseria meningitidis serogroup C (strain 053442), this protein is Small ribosomal subunit protein uS2.